The sequence spans 192 residues: DNA dC-&gt;dU-editing enzyme APOBEC-3Ca (192 aa).

The 127-residue stretch at 15-141 folds into the CMP/dCMP-type deaminase domain; the sequence is IDPNTFRFHF…PNYQEGLCKL (127 aa). Residue H69 coordinates Zn(2+). The active-site Proton donor is the E71. 2 residues coordinate Zn(2+): C100 and C103.

It belongs to the cytidine and deoxycytidylate deaminase family. (Microbial infection) Interacts with feline foamy virus protein Bet. This interaction does not induce APOBEC3Ca degradation but prevents its dimerization and incorporation into the virion. The cofactor is Zn(2+).

The protein localises to the nucleus. It is found in the cytoplasm. The catalysed reaction is a 2'-deoxycytidine in single-stranded DNA + H2O + H(+) = a 2'-deoxyuridine in single-stranded DNA + NH4(+). In terms of biological role, DNA deaminase (cytidine deaminase) which acts as an inhibitor of retrovirus replication and retrotransposon mobility via deaminase-dependent and -independent mechanisms. Selectively targets single-stranded DNA and does not deaminate double-stranded DNA or single- or double-stranded RNA. Does not reduce infectivity of foamy feline virus, feline immunodeficiency virus or feline leukemia virus. The polypeptide is DNA dC-&gt;dU-editing enzyme APOBEC-3Ca (Felis catus (Cat)).